The chain runs to 891 residues: Alanine--tRNA ligase (891 aa).

Zn(2+)-binding residues include His-574, His-578, Cys-676, and His-680.

It belongs to the class-II aminoacyl-tRNA synthetase family. Requires Zn(2+) as cofactor.

The protein localises to the cytoplasm. It carries out the reaction tRNA(Ala) + L-alanine + ATP = L-alanyl-tRNA(Ala) + AMP + diphosphate. In terms of biological role, catalyzes the attachment of alanine to tRNA(Ala) in a two-step reaction: alanine is first activated by ATP to form Ala-AMP and then transferred to the acceptor end of tRNA(Ala). Also edits incorrectly charged Ser-tRNA(Ala) and Gly-tRNA(Ala) via its editing domain. This Synechococcus sp. (strain WH7803) protein is Alanine--tRNA ligase.